The following is a 77-amino-acid chain: Probable small nuclear ribonucleoprotein G (77 aa).

The Sm domain occupies 4–76; sequence THPPELKKYM…VVIMEPKERI (73 aa).

Belongs to the snRNP Sm proteins family. Core component of the spliceosomal U1, U2, U4 and U5 small nuclear ribonucleoproteins (snRNPs), the building blocks of the spliceosome.

It localises to the cytoplasm. The protein localises to the cytosol. It is found in the nucleus. Its function is as follows. Plays a role in pre-mRNA splicing as a core component of the spliceosomal U1, U2, U4 and U5 small nuclear ribonucleoproteins (snRNPs), the building blocks of the spliceosome. This Caenorhabditis elegans protein is Probable small nuclear ribonucleoprotein G (snr-7).